A 148-amino-acid chain; its full sequence is Glutamyl-tRNA(Gln) amidotransferase subunit C, mitochondrial (148 aa).

This sequence belongs to the GatC family. Subunit of the heterotrimeric GatCAB amidotransferase (AdT) complex, composed of A, B and C subunits.

It localises to the mitochondrion. It catalyses the reaction L-glutamyl-tRNA(Gln) + L-glutamine + ATP + H2O = L-glutaminyl-tRNA(Gln) + L-glutamate + ADP + phosphate + H(+). Allows the formation of correctly charged Gln-tRNA(Gln) through the transamidation of misacylated Glu-tRNA(Gln) in the mitochondria. The reaction takes place in the presence of glutamine and ATP through an activated gamma-phospho-Glu-tRNA(Gln). This chain is Glutamyl-tRNA(Gln) amidotransferase subunit C, mitochondrial, found in Drosophila yakuba (Fruit fly).